Here is a 420-residue protein sequence, read N- to C-terminus: Dynein axonemal assembly factor 4 (420 aa).

One can recognise a CS domain in the interval 3–87 (VRVSEFSWQQ…KEPVLWDSLS (85 aa)). Residues 7–103 (EFSWQQTPAT…EMMQRIREKS (97 aa)) are mediates interaction with ESR1 and STUB1. Positions 164–192 (ECQKKADGQKRVQRKEKPLEGKQAEETKA) are enriched in basic and acidic residues. Positions 164–212 (ECQKKADGQKRVQRKEKPLEGKQAEETKALKPRGLPRKAPPTRLPTRGR) are disordered. 3 TPR repeats span residues 288–321 (PDWL…NCKI), 322–355 (PLLY…LTPP), and 364–397 (MKAH…DPAN).

Interacts with ZMYND10. Interacts with ESR1 and ESR2. Interacts with STUB1. Interacts with DNAAF2. Interacts with CCT3, CCT4, CCT5 and CCT8. Interacts with DNAAF6/PIH1D3.

It is found in the nucleus. The protein resides in the cytoplasm. It localises to the dynein axonemal particle. Its subcellular location is the cell projection. The protein localises to the neuron projection. Functionally, involved in neuronal migration during development of the cerebral neocortex. May regulate the stability and proteasomal degradation of the estrogen receptors that play an important role in neuronal differentiation, survival and plasticity. Axonemal dynein assembly factor required for ciliary motility. The protein is Dynein axonemal assembly factor 4 of Mus musculus (Mouse).